Consider the following 81-residue polypeptide: Translational regulator CsrA (81 aa).

The protein belongs to the CsrA/RsmA family. As to quaternary structure, homodimer; the beta-strands of each monomer intercalate to form a hydrophobic core, while the alpha-helices form wings that extend away from the core.

The protein resides in the cytoplasm. Its function is as follows. A translational regulator that binds mRNA to regulate translation initiation and/or mRNA stability. Usually binds in the 5'-UTR at or near the Shine-Dalgarno sequence preventing ribosome-binding, thus repressing translation. Its main target seems to be the major flagellin gene, while its function is anatagonized by FliW. The sequence is that of Translational regulator CsrA from Halothermothrix orenii (strain H 168 / OCM 544 / DSM 9562).